Reading from the N-terminus, the 108-residue chain is Large ribosomal subunit protein uL24 (108 aa).

Residues 46–65 (RHTRVQQSSRGSQSGGIVTQ) are disordered. The span at 51–61 (QQSSRGSQSGG) shows a compositional bias: low complexity.

The protein belongs to the universal ribosomal protein uL24 family. In terms of assembly, part of the 50S ribosomal subunit.

Its function is as follows. One of two assembly initiator proteins, it binds directly to the 5'-end of the 23S rRNA, where it nucleates assembly of the 50S subunit. One of the proteins that surrounds the polypeptide exit tunnel on the outside of the subunit. The sequence is that of Large ribosomal subunit protein uL24 from Parafrankia sp. (strain EAN1pec).